The chain runs to 377 residues: Multiple sugar-binding transport ATP-binding protein MsmK (377 aa).

Residues 4–246 enclose the ABC transporter domain; the sequence is LNLNHIYKKY…PANKFVAGFI (243 aa). 38–45 contacts ATP; that stretch reads GPSGCGKS.

Belongs to the ABC transporter superfamily.

Its subcellular location is the cell membrane. Functionally, involved in a binding protein-dependent transport system responsible for the uptake of melibiose, raffinose and isomaltotriose. Probably responsible for energy coupling to the transport system. In Streptococcus mutans serotype c (strain ATCC 700610 / UA159), this protein is Multiple sugar-binding transport ATP-binding protein MsmK (msmK).